The sequence spans 365 residues: MAQTTKHIVVLPGDHVGQEITEEAIKVLNAISSVRPNVNFDFQHHLIGGAAIDATGVPLPDEALEASKKADAVLLGAVGGPKWGTGSVRPEQGLLKIRKELQLYANLRPCNFASDSLLDLSPLKPEIVKGTDICIVRELVGGIYFGERKEDEGDGVAWDSEKYSVSEVQRITRMAGFLALQHNPPLPVWSLDKANVLASSRLWRKTVEETIKNEFPTLTVQHQLIDSAAMILVKNPTHLNGVVIANNMFGDIISDEASVIPGSLGLLPSASLASLPDTNTAFGLYEPCHGSAPDLPKGKVNPVATILSVAMMLKLSLNMTEEGIAVEKAVKQVLDSGVRTADLRGSNSTSEVGDAIAKAVKEILA.

Residue 80 to 91 participates in NAD(+) binding; the sequence is GPKWGTGSVRPE. R98, R108, R137, and D226 together coordinate substrate. D226, D251, and D255 together coordinate Mg(2+). Residue 290-301 coordinates NAD(+); that stretch reads GSAPDLPKGKVN.

The protein belongs to the isocitrate and isopropylmalate dehydrogenases family. Homodimer. Mg(2+) is required as a cofactor. The cofactor is Mn(2+).

Its subcellular location is the cytoplasm. The enzyme catalyses (2R,3S)-3-isopropylmalate + NAD(+) = 4-methyl-2-oxopentanoate + CO2 + NADH. Its pathway is amino-acid biosynthesis; L-leucine biosynthesis; L-leucine from 3-methyl-2-oxobutanoate: step 3/4. Functionally, catalyzes the oxidation of 3-carboxy-2-hydroxy-4-methylpentanoate (3-isopropylmalate) to 3-carboxy-4-methyl-2-oxopentanoate. The product decarboxylates to 4-methyl-2 oxopentanoate. The polypeptide is 3-isopropylmalate dehydrogenase (LEU2) (Maudiozyma exigua (Yeast)).